The chain runs to 267 residues: MKLALRVAYDGSAFYGFQRQPGVRTVEGEIIKVLQKLGIIESPEKNDFKGASRTDRGVSAFFNVVSFVPSERPDLARPEVLNHHLSDVWVLGIAEVPDDFHPRFWAKFKTYRYYLVNEGFDLSAMRECASLFVGRHDFSAFAKLEPGRDPIREVERVEVIERQGYLVIEVQGKSFLWEMVRRIVNALRFCGLGLLEAEEVERMLSGEYGKKIPPAPPEGLVLWHIEYPGIGFEGDEKGIKKARRDIFERYSRALTRAALFGDFLLEY.

Residue Asp55 is the Nucleophile of the active site. A substrate-binding site is contributed by Tyr111.

It belongs to the tRNA pseudouridine synthase TruA family.

It carries out the reaction uridine(38/39/40) in tRNA = pseudouridine(38/39/40) in tRNA. Its function is as follows. Formation of pseudouridine at positions 38, 39 and 40 in the anticodon stem and loop of transfer RNAs. The sequence is that of tRNA pseudouridine synthase A from Thermococcus kodakarensis (strain ATCC BAA-918 / JCM 12380 / KOD1) (Pyrococcus kodakaraensis (strain KOD1)).